We begin with the raw amino-acid sequence, 297 residues long: Protein PecM (297 aa).

The next 10 membrane-spanning stretches (helical) occupy residues 6-26 (FAFYAPCVWGTTYFVTTQFLP), 38-58 (ALPAGIILILGKNLPPVGWLW), 60-80 (LFVLGALNIGVFFVMLFFAAY), 86-106 (VVALVGSLQPLIVILLSFLLL), 116-136 (VAAVAGGIGIVLLISLPKAPL), 138-158 (PAGLVASALATMSMASGLVLT), 167-187 (MTMLTFTGWQLFCGGLVILPV), 203-223 (LAGYLYLAIPGSLLAYFMWFS), 231-251 (VIMSLLGFLSPLVALLLGFLF), and 261-281 (LVGVVFIFSALIIVQDISLFS). EamA domains follow at residues 12-130 (CVWG…LLIS) and 149-276 (MSMA…IVQD).

The protein belongs to the EamA transporter family.

Its subcellular location is the cell membrane. Involved in pectinase, cellulase, and blue pigment regulation. This is Protein PecM (pecM) from Dickeya dadantii (strain 3937) (Erwinia chrysanthemi (strain 3937)).